The primary structure comprises 58 residues: uncharacterized protein (58 aa).

The helical transmembrane segment at 5–27 (FLHANITIIPHSVLYVSLSYYII) threads the bilayer.

Its subcellular location is the membrane. This is an uncharacterized protein from Saccharomyces cerevisiae (strain ATCC 204508 / S288c) (Baker's yeast).